A 250-amino-acid polypeptide reads, in one-letter code: Triosephosphate isomerase (250 aa).

9–11 (NWK) lines the substrate pocket. Histidine 96 serves as the catalytic Electrophile. Residue glutamate 168 is the Proton acceptor of the active site. Substrate contacts are provided by residues glycine 174, serine 216, and 237–238 (GG).

It belongs to the triosephosphate isomerase family. Homodimer.

It localises to the cytoplasm. The enzyme catalyses D-glyceraldehyde 3-phosphate = dihydroxyacetone phosphate. The protein operates within carbohydrate biosynthesis; gluconeogenesis. It participates in carbohydrate degradation; glycolysis; D-glyceraldehyde 3-phosphate from glycerone phosphate: step 1/1. Its function is as follows. Involved in the gluconeogenesis. Catalyzes stereospecifically the conversion of dihydroxyacetone phosphate (DHAP) to D-glyceraldehyde-3-phosphate (G3P). The polypeptide is Triosephosphate isomerase (Leptospira borgpetersenii serovar Hardjo-bovis (strain JB197)).